Consider the following 258-residue polypeptide: Enoyl-[acyl-carrier-protein] reductase [NADH] FabI (258 aa).

Residues G14, 20 to 21 (SI), 67 to 68 (DV), and I95 contribute to the NAD(+) site. Residue A98 coordinates substrate. Active-site proton acceptor residues include Y148 and Y158. NAD(+)-binding positions include K165 and 194–198 (IRTLS).

The protein belongs to the short-chain dehydrogenases/reductases (SDR) family. FabI subfamily. In terms of assembly, homotetramer.

It carries out the reaction a 2,3-saturated acyl-[ACP] + NAD(+) = a (2E)-enoyl-[ACP] + NADH + H(+). The catalysed reaction is (2E)-butenoyl-[ACP] + NADH + H(+) = butanoyl-[ACP] + NAD(+). It functions in the pathway lipid metabolism; fatty acid biosynthesis. Its activity is regulated as follows. Inhibited by triclosan and acrylamide. Catalyzes the reduction of a carbon-carbon double bond in an enoyl moiety that is covalently linked to an acyl carrier protein (ACP). Involved in the elongation cycle of fatty acid which are used in the lipid metabolism. This chain is Enoyl-[acyl-carrier-protein] reductase [NADH] FabI (fabI), found in Bacillus subtilis (strain 168).